Here is a 739-residue protein sequence, read N- to C-terminus: Transcription activator of gluconeogenesis MCYG_04674 (739 aa).

A compositionally biased stretch (polar residues) spans 1–33; the sequence is MSPHQTTGQESDNMAVNGENAQASSQYIQLNSE. The segment at 1-62 is disordered; sequence MSPHQTTGQE…PSRPKRKKAK (62 aa). Residues 40-55 are compositionally biased toward basic and acidic residues; sequence AAEKKAAAAKAKDPSR. Positions 65–93 form a DNA-binding region, zn(2)-C6 fungal-type; that stretch reads CYACQRGHLTCGDERPCQRCIKRGFQDAC. Disordered regions lie at residues 174–223, 264–308, 380–420, 537–574, and 639–668; these read GPEN…QFNS, DTPP…GDSG, SRQN…HKNA, NHNV…STTA, and AQNN…GQRR. 2 stretches are compositionally biased toward polar residues: residues 267–284 and 397–411; these read PSDN…SSGT and PVVS…NLNI. The span at 547–557 shows a compositional bias: low complexity; it reads GLLTGSTSRGS. Over residues 562–574 the composition is skewed to polar residues; it reads PYSSDQFNSSTTA. Over residues 653 to 664 the composition is skewed to low complexity; sequence NSSSNGTTSTGR.

This sequence belongs to the ERT1/acuK family.

Its subcellular location is the nucleus. Its function is as follows. Transcription factor which regulates nonfermentable carbon utilization. Activator of gluconeogenetic genes. The protein is Transcription activator of gluconeogenesis MCYG_04674 of Arthroderma otae (strain ATCC MYA-4605 / CBS 113480) (Microsporum canis).